The chain runs to 295 residues: Phosphatidylserine decarboxylase proenzyme (295 aa).

Active-site charge relay system; for autoendoproteolytic cleavage activity residues include aspartate 113, histidine 169, and serine 256. Serine 256 functions as the Schiff-base intermediate with substrate; via pyruvic acid; for decarboxylase activity in the catalytic mechanism. Serine 256 carries the post-translational modification Pyruvic acid (Ser); by autocatalysis.

Belongs to the phosphatidylserine decarboxylase family. PSD-B subfamily. Prokaryotic type II sub-subfamily. As to quaternary structure, heterodimer of a large membrane-associated beta subunit and a small pyruvoyl-containing alpha subunit. Pyruvate serves as cofactor. Post-translationally, is synthesized initially as an inactive proenzyme. Formation of the active enzyme involves a self-maturation process in which the active site pyruvoyl group is generated from an internal serine residue via an autocatalytic post-translational modification. Two non-identical subunits are generated from the proenzyme in this reaction, and the pyruvate is formed at the N-terminus of the alpha chain, which is derived from the carboxyl end of the proenzyme. The autoendoproteolytic cleavage occurs by a canonical serine protease mechanism, in which the side chain hydroxyl group of the serine supplies its oxygen atom to form the C-terminus of the beta chain, while the remainder of the serine residue undergoes an oxidative deamination to produce ammonia and the pyruvoyl prosthetic group on the alpha chain. During this reaction, the Ser that is part of the protease active site of the proenzyme becomes the pyruvoyl prosthetic group, which constitutes an essential element of the active site of the mature decarboxylase.

The protein resides in the cell membrane. The enzyme catalyses a 1,2-diacyl-sn-glycero-3-phospho-L-serine + H(+) = a 1,2-diacyl-sn-glycero-3-phosphoethanolamine + CO2. Its pathway is phospholipid metabolism; phosphatidylethanolamine biosynthesis; phosphatidylethanolamine from CDP-diacylglycerol: step 2/2. Its function is as follows. Catalyzes the formation of phosphatidylethanolamine (PtdEtn) from phosphatidylserine (PtdSer). The sequence is that of Phosphatidylserine decarboxylase proenzyme from Clostridium botulinum (strain ATCC 19397 / Type A).